The chain runs to 132 residues: Small ribosomal subunit protein uS8 (132 aa).

This sequence belongs to the universal ribosomal protein uS8 family. As to quaternary structure, part of the 30S ribosomal subunit. Contacts proteins S5 and S12.

Its function is as follows. One of the primary rRNA binding proteins, it binds directly to 16S rRNA central domain where it helps coordinate assembly of the platform of the 30S subunit. The polypeptide is Small ribosomal subunit protein uS8 (Clostridium kluyveri (strain NBRC 12016)).